A 116-amino-acid chain; its full sequence is Large ribosomal subunit protein uL18 (116 aa).

The protein belongs to the universal ribosomal protein uL18 family. In terms of assembly, part of the 50S ribosomal subunit; part of the 5S rRNA/L5/L18/L25 subcomplex. Contacts the 5S and 23S rRNAs.

This is one of the proteins that bind and probably mediate the attachment of the 5S RNA into the large ribosomal subunit, where it forms part of the central protuberance. The sequence is that of Large ribosomal subunit protein uL18 from Shewanella halifaxensis (strain HAW-EB4).